Consider the following 39-residue polypeptide: SGSKTAKIGDGCFGVRIDRIGSTSGMGCGGVPKPTPGGS.

Residues 1–8 (SGSKTAKI) constitute a propeptide that is removed on maturation. Cysteine 12 and cysteine 28 form a disulfide bridge.

Belongs to the natriuretic peptide family. In terms of tissue distribution, expressed by the venom gland.

It is found in the secreted. Snake venom natriuretic peptide that targets both NPR1 and NPR2. Exhibits hypotensive and vasodepressor activities. The protein is Natriuretic peptide CnNP-a of Cryptophis nigrescens (Eastern small-eyed snake).